The sequence spans 709 residues: MMETPAESVRARVSSVTFYNVTQTAGRWWAIWVVGIVPIKREDVETLIVVQACQPPLGGSLEPPVVNAPSTTELNFLRWERELRRSGGLIAMLADAAEKDLFDLSFRTRDRRLLSAARVEDEQGLIFQPLFPAQVVCQSCSGDDGRDQQPPPVDGFGSEMEGEQTCPHAQRHSESPGQLDVYIRTPRGDVFTYSTETPDDPSPVPFRDILRPVTYEVDLVSSDGATGRGGDARRHRVSLKILEPAGGFESWLVNSWSMAGGGLYAFLRSIYASCYANHRGTKPIFYLLDPELCPGGSDFQPYVPGFPFLPIHYVGRARPAFWHRAPHSEGLLLLDLNLGVSGTPLADALLGLDARSGQRRGSLLLQQIWPPTRKEINPRHVCTREGGEGGGEDETTVVGRAEATAILEADATWWLYELARCHLSARGAPVGTPDGGGQARDAQTWLRALHRYGTSDTRRALGGLYTAVTRVLLHAAADLGLTWAYADEFILGFVAPTSAHPSEEPLAQAFLQGVKDSEDASRLDRDVMGGEATVARRHIRVKARRGPGCLLMAIFQGDLYVGGCREHSGPFLVWHEAFSWTLDQLAARPEADKAPPSHDHLLTLVRDLTRRLAPGRRRNRFWALPRAWLQRLRRAGLRLSGSHVCLLDKDGARPAPCQTATEHGLSPTAYFREIMAFLLDVISALHPGYTIPMEITRETDLLMTVLSLF.

The interval 141-176 is disordered; it reads SGDDGRDQQPPPVDGFGSEMEGEQTCPHAQRHSESP.

The protein belongs to the herpesviridae HEPA family. Associates with the primase and the helicase to form the helicase-primase complex. Interacts with the origin-binding protein. Interacts with the polymerase catalytic subunit.

Its subcellular location is the host nucleus. In terms of biological role, component of the helicase/primase complex. Unwinds the DNA at the replication forks and generates single-stranded DNA for both leading and lagging strand synthesis. The primase synthesizes short RNA primers on the lagging strand that the polymerase presumably elongates using dNTPs. The primase-associated factor has no known catalytic activity in the complex and may serve to facilitate the formation of the replisome by directly interacting with the origin-binding protein and the polymerase. This is DNA helicase/primase complex-associated protein from Epstein-Barr virus (strain B95-8) (HHV-4).